Here is a 117-residue protein sequence, read N- to C-terminus: Ribosome-binding factor A (117 aa).

It belongs to the RbfA family. Monomer. Binds 30S ribosomal subunits, but not 50S ribosomal subunits or 70S ribosomes.

The protein localises to the cytoplasm. Functionally, one of several proteins that assist in the late maturation steps of the functional core of the 30S ribosomal subunit. Associates with free 30S ribosomal subunits (but not with 30S subunits that are part of 70S ribosomes or polysomes). Required for efficient processing of 16S rRNA. May interact with the 5'-terminal helix region of 16S rRNA. The polypeptide is Ribosome-binding factor A (Lactiplantibacillus plantarum (strain ATCC BAA-793 / NCIMB 8826 / WCFS1) (Lactobacillus plantarum)).